We begin with the raw amino-acid sequence, 246 residues long: Myelin-oligodendrocyte glycoprotein (246 aa).

A signal peptide spans 1 to 28; it reads MACLWSFSWPSCFLSLLLLLLQLSCSYA. Residues 29-156 lie on the Extracellular side of the membrane; the sequence is GQFRVIGPGY…FYWVNPGVLT (128 aa). The region spanning 31–144 is the Ig-like V-type domain; sequence FRVIGPGYPI…EEAAMELKVE (114 aa). A disulfide bridge links Cys-52 with Cys-126. Residue Asn-59 is glycosylated (N-linked (GlcNAc...) asparagine). A helical transmembrane segment spans residues 157–177; sequence LIALVPTILLQVPVGLVFLFL. Topologically, residues 178–209 are cytoplasmic; sequence QHRLRGKLRAEVENLHRTFDPHFLRVPCWKIT. The helical transmembrane segment at 210–230 threads the bilayer; it reads LFVIVPVLGPLVALIICYNWL. The Extracellular portion of the chain corresponds to 231–246; the sequence is HRRLAGQFLEELRNPF.

It belongs to the immunoglobulin superfamily. BTN/MOG family. As to quaternary structure, homodimer. Found exclusively in the CNS, where it is localized on the surface of myelin and oligodendrocyte cytoplasmic membranes. Reduced expression levels are observed in jimpy and quacking dysmyelinating mutant mice.

It is found in the membrane. Minor component of the myelin sheath. May be involved in completion and/or maintenance of the myelin sheath and in cell-cell communication. Mediates homophilic cell-cell adhesion. This chain is Myelin-oligodendrocyte glycoprotein (Mog), found in Mus musculus (Mouse).